A 386-amino-acid polypeptide reads, in one-letter code: MCDFVFCYGSSNERKLSMNIKETKKGLQLYVSNSEYIYIEIKKTYRKNLVINFEDSLKFMKFLVRKKIHCQFLTDKHGCGFCKNYREYFQYIVQNKHMKHIKFFVGKFIPMIRSRCGYSEFNLSNVVEDNKIFENNNIDLEIVKYMFEIGNLFDVDYIVVHVLTELDDIEIDFIDSLIDIYKQKITYLFTEDFSDIDNLLYTVLDLNIFITPALKTDDINLFNYVVEELSSIMSDIKEEELSKKQIIPFKKIKSKYILDADRIFKLIDICVGSFYEKSFHCPNIFKQLVEDYIENHGSIRLLFNNFFRKIVANDKFAYAGILCEKVNSDQNFLRKILFESVGSIKEAQILIDYGLDHEEIYEDPDFRKLPKTITKFIKKLIKETSN.

It belongs to the mimivirus L17x/L18x family.

This is an uncharacterized protein from Acanthamoeba polyphaga mimivirus (APMV).